The primary structure comprises 647 residues: Starch synthase 1, chloroplastic/amyloplastic (647 aa).

Residues 1 to 41 constitute a chloroplast transit peptide; sequence MAATGVGAGCLAPSVRLRADPATAARASACVVRARLRRVAR. Residues 66–91 show a composition bias toward pro residues; it reads PLVPGFLAPPPPAPAQSPAPTQPPLP. Positions 66–95 are disordered; that stretch reads PLVPGFLAPPPPAPAQSPAPTQPPLPDAGV. Residue lysine 153 coordinates ADP-alpha-D-glucose.

Belongs to the glycosyltransferase 1 family. Bacterial/plant glycogen synthase subfamily.

Its subcellular location is the plastid. The protein localises to the chloroplast. The protein resides in the amyloplast. It carries out the reaction [(1-&gt;4)-alpha-D-glucosyl](n) + ADP-alpha-D-glucose = [(1-&gt;4)-alpha-D-glucosyl](n+1) + ADP + H(+). It participates in glycan biosynthesis; starch biosynthesis. The polypeptide is Starch synthase 1, chloroplastic/amyloplastic (WSSI-2) (Triticum aestivum (Wheat)).